A 43-amino-acid polypeptide reads, in one-letter code: Protein PsbN (43 aa).

Residues 4–24 form a helical membrane-spanning segment; it reads AIVLSISMAAVVVAITGISIY.

It belongs to the PsbN family.

It localises to the cellular thylakoid membrane. Functionally, may play a role in photosystem I and II biogenesis. The sequence is that of Protein PsbN from Nostoc punctiforme (strain ATCC 29133 / PCC 73102).